Here is an 87-residue protein sequence, read N- to C-terminus: Small ribosomal subunit protein bS20 (87 aa).

The tract at residues 1-26 (MANTAQAKKRVRQNIKQRERNSGLRS) is disordered.

The protein belongs to the bacterial ribosomal protein bS20 family.

Functionally, binds directly to 16S ribosomal RNA. The polypeptide is Small ribosomal subunit protein bS20 (Nitrosomonas eutropha (strain DSM 101675 / C91 / Nm57)).